A 143-amino-acid chain; its full sequence is Regulator of ribonuclease activity B (143 aa).

Residues 117-135 (DPDAEYDDEDGENEDDESE) are compositionally biased toward acidic residues. The disordered stretch occupies residues 117–143 (DPDAEYDDEDGENEDDESESDKSSRLH).

Belongs to the RraB family. As to quaternary structure, interacts with the C-terminal region of Rne.

It is found in the cytoplasm. Its function is as follows. Globally modulates RNA abundance by binding to RNase E (Rne) and regulating its endonucleolytic activity. Can modulate Rne action in a substrate-dependent manner by altering the composition of the degradosome. The sequence is that of Regulator of ribonuclease activity B from Proteus mirabilis (strain HI4320).